The chain runs to 495 residues: 1-aminocyclopropane-1-carboxylate synthase 6 (495 aa).

The substrate site is built by glutamate 58 and tyrosine 96. Lysine 280 carries the post-translational modification N6-(pyridoxal phosphate)lysine. 3 positions are modified to phosphoserine: serine 480, serine 483, and serine 488.

Belongs to the class-I pyridoxal-phosphate-dependent aminotransferase family. In terms of assembly, homodimer and heterodimer. In vivo, the relevance of heterodimerization with other ACS enzymes is however unsure. Interacts with GRF3. Requires pyridoxal 5'-phosphate as cofactor. Post-translationally, phosphorylated on serine residue by MAP kinase (MPK6). In terms of processing, may be processed at its C-terminus. Expressed in roots and flowers.

The catalysed reaction is S-adenosyl-L-methionine = 1-aminocyclopropane-1-carboxylate + S-methyl-5'-thioadenosine + H(+). The protein operates within alkene biosynthesis; ethylene biosynthesis via S-adenosyl-L-methionine; ethylene from S-adenosyl-L-methionine: step 1/2. 1-aminocyclopropane-1-carboxylate synthase (ACS) enzymes catalyze the conversion of S-adenosyl-L-methionine (SAM) into 1-aminocyclopropane-1-carboxylate (ACC), a direct precursor of ethylene. Involved in bacterial flagellin-induced ethylene production. The sequence is that of 1-aminocyclopropane-1-carboxylate synthase 6 (ACS6) from Arabidopsis thaliana (Mouse-ear cress).